The following is a 305-amino-acid chain: MLETRSGYKSGFISIIGRPNVGKSTFLNRVIGQKIAIMSDKPQTTRNKVQGVLTTTDSQMIFIDTPGIHKPKHKLGDFMLKVAKNTLREVDVIMFMVNAEQKLGKGDEFILEMLAGNSTPVFLVINKIDQIHPDELLGIIESYKERYEFAEIIPISALQGNNVESLLDTLPKYLPEGPQYYPADQVTDHPERFIIYELIREKVLHLTREEIPHSIAVVIDKIRRDEENNDKIHVAATIMVERDSQKGIVIGKRGALLKEVGTRARKDIEMLLGSKVYLELWVKVQKDWRNKSTHLRDFGFRDDEY.

One can recognise an Era-type G domain in the interval 9 to 176 (KSGFISIIGR…LDTLPKYLPE (168 aa)). Residues 17–24 (GRPNVGKS) are G1. 17-24 (GRPNVGKS) is a GTP binding site. A G2 region spans residues 43 to 47 (QTTRN). The interval 64–67 (DTPG) is G3. GTP is bound by residues 64–68 (DTPGI) and 126–129 (NKID). The G4 stretch occupies residues 126–129 (NKID). Residues 155–157 (ISA) form a G5 region. In terms of domain architecture, KH type-2 spans 207–286 (TREEIPHSIA…YLELWVKVQK (80 aa)).

Belongs to the TRAFAC class TrmE-Era-EngA-EngB-Septin-like GTPase superfamily. Era GTPase family. As to quaternary structure, monomer.

It localises to the cytoplasm. The protein resides in the cell membrane. Functionally, an essential GTPase that binds both GDP and GTP, with rapid nucleotide exchange. Plays a role in 16S rRNA processing and 30S ribosomal subunit biogenesis and possibly also in cell cycle regulation and energy metabolism. The protein is GTPase Era of Lysinibacillus sphaericus (strain C3-41).